The following is a 249-amino-acid chain: Probable transcriptional regulatory protein Tfu_2096 (249 aa).

It belongs to the TACO1 family.

It is found in the cytoplasm. The polypeptide is Probable transcriptional regulatory protein Tfu_2096 (Thermobifida fusca (strain YX)).